The following is a 345-amino-acid chain: AP2-like ethylene-responsive transcription factor At1g16060 (345 aa).

The tract at residues 15–62 is disordered; it reads TRQSKKTSVENETGDDQSATSVVLKAKRKRRSQPRDAPPQRSSVHRGV. 2 DNA-binding regions (AP2/ERF) span residues 58-124 and 160-218; these read VHRG…LNFP and KYRG…TNFD. A disordered region spans residues 243-302; sequence HSDLSPFIKPNHESDLSQSQSSSEDNDDRKTKLLKSSPLVAEEVIGPSTPPEIAPPRRSF.

The protein belongs to the AP2/ERF transcription factor family. AP2 subfamily.

It is found in the nucleus. Functionally, probably acts as a transcriptional activator. Binds to the GCC-box pathogenesis-related promoter element. May be involved in the regulation of gene expression by stress factors and by components of stress signal transduction pathways. In Arabidopsis thaliana (Mouse-ear cress), this protein is AP2-like ethylene-responsive transcription factor At1g16060.